The chain runs to 400 residues: tRNA-specific 2-thiouridylase MnmA (400 aa).

Residues 19–26 (AMSGGVDS) and Leu-45 contribute to the ATP site. Cys-113 acts as the Nucleophile in catalysis. Residues Cys-113 and Cys-210 are joined by a disulfide bond. Gly-137 provides a ligand contact to ATP. Residues 160 to 162 (RDQ) form an interaction with tRNA region. Cys-210 serves as the catalytic Cysteine persulfide intermediate.

This sequence belongs to the MnmA/TRMU family.

It is found in the cytoplasm. The catalysed reaction is S-sulfanyl-L-cysteinyl-[protein] + uridine(34) in tRNA + AH2 + ATP = 2-thiouridine(34) in tRNA + L-cysteinyl-[protein] + A + AMP + diphosphate + H(+). In terms of biological role, catalyzes the 2-thiolation of uridine at the wobble position (U34) of tRNA, leading to the formation of s(2)U34. This Nitrobacter hamburgensis (strain DSM 10229 / NCIMB 13809 / X14) protein is tRNA-specific 2-thiouridylase MnmA.